We begin with the raw amino-acid sequence, 302 residues long: MTNISLDKLVTESRNENTKDIDRVETLEMLKMINDEDKKVAEAVEKELIHIAKAVDKIGESFLNGGRLIYVGAGTSGRLGVLDASECPPTYGVSYDLVRGIIAGGESAMFKAREGAEDSKKLCIKDLKNINFGKNDILVGIAASGRTPYVIGGLEYANGIGATTISVTCNPESEMSKIANISIAPVVGPEAITGSTRMKAGTAQKMVLNMLSTGAMVKTGKVYGNLMVDLKATNEKLVERAKRIVMQATGSKREQVEKILKETNFDVKLSIFMIESSLDKIKAKEILDKNKGYIVEAIKEIS.

Residues 58 to 221 (IGESFLNGGR…STGAMVKTGK (164 aa)) form the SIS domain. Glu86 acts as the Proton donor in catalysis. Glu117 is a catalytic residue.

This sequence belongs to the GCKR-like family. MurNAc-6-P etherase subfamily. Homodimer.

The enzyme catalyses N-acetyl-D-muramate 6-phosphate + H2O = N-acetyl-D-glucosamine 6-phosphate + (R)-lactate. The protein operates within amino-sugar metabolism; N-acetylmuramate degradation. Its function is as follows. Specifically catalyzes the cleavage of the D-lactyl ether substituent of MurNAc 6-phosphate, producing GlcNAc 6-phosphate and D-lactate. This chain is N-acetylmuramic acid 6-phosphate etherase, found in Clostridium botulinum (strain Langeland / NCTC 10281 / Type F).